Consider the following 326-residue polypeptide: Beta-1,3-galactosyltransferase 1 (326 aa).

Over 1-6 (MASKVS) the chain is Cytoplasmic. The helical; Signal-anchor for type II membrane protein transmembrane segment at 7–26 (CLYVLTVVCWASALWYLSIT) threads the bilayer. At 27-326 (RPTSSYTGSK…DMSSKKHLRC (300 aa)) the chain is on the lumenal side. N-linked (GlcNAc...) asparagine glycans are attached at residues N47 and N151.

It belongs to the glycosyltransferase 31 family. Mn(2+) serves as cofactor.

Its subcellular location is the golgi apparatus membrane. The enzyme catalyses an N-acetyl-beta-D-glucosaminyl derivative + UDP-alpha-D-galactose = a beta-D-galactosyl-(1-&gt;3)-N-acetyl-beta-D-glucosaminyl derivative + UDP + H(+). It carries out the reaction a beta-D-GlcNAc-(1-&gt;3)-beta-D-Gal-(1-&gt;4)-beta-D-Glc-(1&lt;-&gt;1)-Cer(d18:1(4E)) + UDP-alpha-D-galactose = a beta-D-Gal-(1-&gt;3)-beta-D-GlcNAc-(1-&gt;3)-beta-D-Gal-(1-&gt;4)-beta-D-Glc-(1&lt;-&gt;1')-Cer(d18:1(4E)) + UDP + H(+). The protein operates within protein modification; protein glycosylation. In terms of biological role, beta-1,3-galactosyltransferase that transfers galactose from UDP-galactose to substrates with a terminal beta-N-acetylglucosamine (beta-GlcNAc) residue. Involved in the biosynthesis of the carbohydrate moieties of glycolipids and glycoproteins. The chain is Beta-1,3-galactosyltransferase 1 (B3GALT1) from Gorilla gorilla gorilla (Western lowland gorilla).